A 293-amino-acid polypeptide reads, in one-letter code: Nucleotide-binding protein BC_5156 (293 aa).

Residue 14–21 (GMSGAGKT) coordinates ATP. GTP is bound at residue 65–68 (DLRG).

It belongs to the RapZ-like family.

In terms of biological role, displays ATPase and GTPase activities. The chain is Nucleotide-binding protein BC_5156 from Bacillus cereus (strain ATCC 14579 / DSM 31 / CCUG 7414 / JCM 2152 / NBRC 15305 / NCIMB 9373 / NCTC 2599 / NRRL B-3711).